The following is a 104-amino-acid chain: AVIToxin-VAR1 (104 aa).

The signal sequence occupies residues 1-19; it reads MRSLLCAPLLLLLLSAGES. 5 disulfide bridges follow: C26-C38, C32-C50, C37-C78, C60-C86, and C80-C96.

Belongs to the AVIT (prokineticin) family. Expressed by the venom gland.

It localises to the secreted. In terms of biological role, potent agonist for both PKR1/PROKR1 and PKR2/PROKR2. Potently contracts gastrointestinal (GI) smooth muscle. The sequence is that of AVIToxin-VAR1 from Varanus varius (Lace monitor lizard).